We begin with the raw amino-acid sequence, 278 residues long: Indole-3-glycerol phosphate synthase (278 aa).

Belongs to the TrpC family.

It catalyses the reaction 1-(2-carboxyphenylamino)-1-deoxy-D-ribulose 5-phosphate + H(+) = (1S,2R)-1-C-(indol-3-yl)glycerol 3-phosphate + CO2 + H2O. It participates in amino-acid biosynthesis; L-tryptophan biosynthesis; L-tryptophan from chorismate: step 4/5. The polypeptide is Indole-3-glycerol phosphate synthase (Pseudomonas fluorescens (strain Pf0-1)).